Reading from the N-terminus, the 331-residue chain is GTP 3',8-cyclase (331 aa).

Residues 9-233 (PFGRRITYLR…VRSSKVTGGP (225 aa)) form the Radical SAM core domain. R18 is a GTP binding site. 2 residues coordinate [4Fe-4S] cluster: C25 and C29. Y31 serves as a coordination point for S-adenosyl-L-methionine. A [4Fe-4S] cluster-binding site is contributed by C32. R67 provides a ligand contact to GTP. G71 lines the S-adenosyl-L-methionine pocket. T98 lines the GTP pocket. Position 122 (S122) interacts with S-adenosyl-L-methionine. Residue K159 coordinates GTP. Position 193 (M193) interacts with S-adenosyl-L-methionine. The [4Fe-4S] cluster site is built by C257 and C260. 262–264 (RVR) contacts GTP. A [4Fe-4S] cluster-binding site is contributed by C274.

This sequence belongs to the radical SAM superfamily. MoaA family. As to quaternary structure, monomer and homodimer. [4Fe-4S] cluster serves as cofactor.

It carries out the reaction GTP + AH2 + S-adenosyl-L-methionine = (8S)-3',8-cyclo-7,8-dihydroguanosine 5'-triphosphate + 5'-deoxyadenosine + L-methionine + A + H(+). Its pathway is cofactor biosynthesis; molybdopterin biosynthesis. In terms of biological role, catalyzes the cyclization of GTP to (8S)-3',8-cyclo-7,8-dihydroguanosine 5'-triphosphate. The protein is GTP 3',8-cyclase of Ectopseudomonas mendocina (strain ymp) (Pseudomonas mendocina).